The sequence spans 250 residues: 2,3-bisphosphoglycerate-dependent phosphoglycerate mutase (250 aa).

Substrate-binding positions include 10-17 (RHGESQWN), 23-24 (TG), R62, 89-92 (ERHY), K100, 116-117 (RR), and 185-186 (GN). H11 (tele-phosphohistidine intermediate) is an active-site residue. Residue E89 is the Proton donor/acceptor of the active site.

This sequence belongs to the phosphoglycerate mutase family. BPG-dependent PGAM subfamily. In terms of assembly, homodimer.

The enzyme catalyses (2R)-2-phosphoglycerate = (2R)-3-phosphoglycerate. It participates in carbohydrate degradation; glycolysis; pyruvate from D-glyceraldehyde 3-phosphate: step 3/5. Its function is as follows. Catalyzes the interconversion of 2-phosphoglycerate and 3-phosphoglycerate. The polypeptide is 2,3-bisphosphoglycerate-dependent phosphoglycerate mutase (Pectobacterium carotovorum subsp. carotovorum (strain PC1)).